A 420-amino-acid chain; its full sequence is ATP phosphoribosyltransferase regulatory subunit (420 aa).

This sequence belongs to the class-II aminoacyl-tRNA synthetase family. HisZ subfamily. As to quaternary structure, heteromultimer composed of HisG and HisZ subunits.

Its subcellular location is the cytoplasm. It functions in the pathway amino-acid biosynthesis; L-histidine biosynthesis; L-histidine from 5-phospho-alpha-D-ribose 1-diphosphate: step 1/9. Required for the first step of histidine biosynthesis. May allow the feedback regulation of ATP phosphoribosyltransferase activity by histidine. The protein is ATP phosphoribosyltransferase regulatory subunit of Bacillus cereus (strain ATCC 14579 / DSM 31 / CCUG 7414 / JCM 2152 / NBRC 15305 / NCIMB 9373 / NCTC 2599 / NRRL B-3711).